A 494-amino-acid polypeptide reads, in one-letter code: Solute carrier family 2, facilitated glucose transporter member 3 (494 aa).

The Cytoplasmic segment spans residues 1–10 (MGTTKVTTPL). A helical transmembrane segment spans residues 11-32 (IFAISIATIGSFQFGYNTGVIN). The Extracellular portion of the chain corresponds to 33–64 (APEAIIKDFLNYTLEERSETPPSSVLLTSLWS). N-linked (GlcNAc...) asparagine glycosylation is present at N43. Residues 65–85 (LSVAIFSVGGMIGSFSVGLFV) form a helical membrane-spanning segment. The Cytoplasmic portion of the chain corresponds to 86 to 90 (NRFGR). The helical transmembrane segment at 91-111 (RNSMLIVNLLAIAGGCLMGFC) threads the bilayer. Over 112–118 (KIAESVE) the chain is Extracellular. The chain crosses the membrane as a helical span at residues 119 to 142 (MLILGRLIIGLFCGLCTGFVPMYI). Residues 143-153 (GEISPTALRGA) are Cytoplasmic-facing. The chain crosses the membrane as a helical span at residues 154 to 174 (FGTLNQLGIVIGILVAQIFGL). Q159 is a binding site for D-glucose. The Extracellular portion of the chain corresponds to 175 to 183 (KVILGTEDL). Residues 184 to 204 (WPLLLGFTILPAIIQCAALPF) traverse the membrane as a helical segment. The Cytoplasmic segment spans residues 205–269 (CPESPRFLLI…LFRAPNYRQP (65 aa)). Phosphothreonine is present on T232. Residues 270–290 (IIISIMLQLSQQLSGINAVFY) form a helical membrane-spanning segment. An important for selectivity against fructose region spans residues 277–279 (QLS). Residues 280 to 281 (QQ) and N286 contribute to the D-glucose site. Topologically, residues 291 to 304 (YSTGIFKDAGVQEP) are extracellular. The helical transmembrane segment at 305–325 (VYATIGAGVVNTIFTVVSVFL) threads the bilayer. N315 contributes to the D-glucose binding site. The Cytoplasmic segment spans residues 326-331 (VERAGR). The chain crosses the membrane as a helical span at residues 332-352 (RTLHLIGLGGMAFCSILMTIS). The Extracellular portion of the chain corresponds to 353–363 (LLLKDNYSWMS). A helical membrane pass occupies residues 364-389 (FICIGAILVFVAFFEIGPGPIPWFIV). D-glucose contacts are provided by E378 and W386. At 390 to 399 (AELFGQGPRP) the chain is on the cytoplasmic side. Residues 400 to 420 (AAMAVAGCSNWTSNFLVGLLF) form a helical membrane-spanning segment. The Extracellular portion of the chain corresponds to 421-429 (PSATFYLGA). A helical transmembrane segment spans residues 430-450 (YVFIVFTVFLVIFWVFTFFKV). Residues 451-494 (PETRGRTFEEITRAFEGQVQTGTRGEKGPIMEMNSIQPTKDTNA) are Cytoplasmic-facing. The interval 473-494 (TRGEKGPIMEMNSIQPTKDTNA) is disordered. Residues 484 to 494 (NSIQPTKDTNA) show a composition bias toward polar residues. S485 bears the Phosphoserine mark. T492 is modified (phosphothreonine).

Belongs to the major facilitator superfamily. Sugar transporter (TC 2.A.1.1) family. Glucose transporter subfamily. As to quaternary structure, interacts with SMIM43; the interaction may promote SLC2A3-mediated glucose transport to meet the energy needs of mesendoderm differentiation. In terms of tissue distribution, detected in placenta.

The protein resides in the cell membrane. The protein localises to the perikaryon. It localises to the cell projection. The catalysed reaction is D-glucose(out) = D-glucose(in). It carries out the reaction D-galactose(in) = D-galactose(out). Deoxyglucose transport is inhibited by D-glucose, D-galactose and maltose. Galactose transport is inhibited by D-glucose and maltose. In terms of biological role, facilitative glucose transporter. Can also mediate the uptake of various other monosaccharides across the cell membrane. Mediates the uptake of glucose, 2-deoxyglucose, galactose, mannose, xylose and fucose, and probably also dehydroascorbate. Does not mediate fructose transport. Required for mesendoderm differentiation. The chain is Solute carrier family 2, facilitated glucose transporter member 3 from Ovis aries (Sheep).